The sequence spans 246 residues: Auxin-responsive protein IAA11 (246 aa).

Residues 36 to 40 carry the EAR-like (transcriptional repression) motif; the sequence is LGLTL. The PB1 domain occupies 136–235; sequence SMFVKVTMDG…SVRRLRIMKT (100 aa).

Belongs to the Aux/IAA family. In terms of assembly, homodimers and heterodimers. Interacts with TPL. As to expression, preferentially expressed in stems and flowers.

It localises to the nucleus. In terms of biological role, aux/IAA proteins are short-lived transcriptional factors that function as repressors of early auxin response genes at low auxin concentrations. Repression is thought to result from the interaction with auxin response factors (ARFs), proteins that bind to the auxin-responsive promoter element (AuxRE). Formation of heterodimers with ARF proteins may alter their ability to modulate early auxin response genes expression. This Arabidopsis thaliana (Mouse-ear cress) protein is Auxin-responsive protein IAA11 (IAA11).